Consider the following 298-residue polypeptide: Inosose dehydratase (298 aa).

The protein belongs to the IolE/MocC family. Glutathione is required as a cofactor. Co(2+) serves as cofactor. It depends on Mn(2+) as a cofactor.

It catalyses the reaction scyllo-inosose = 3D-3,5/4-trihydroxycyclohexane-1,2-dione + H2O. It functions in the pathway polyol metabolism; myo-inositol degradation into acetyl-CoA; acetyl-CoA from myo-inositol: step 2/7. Its function is as follows. Catalyzes the dehydration of inosose (2-keto-myo-inositol, 2KMI or 2,4,6/3,5-pentahydroxycyclohexanone) to 3D-(3,5/4)-trihydroxycyclohexane-1,2-dione (D-2,3-diketo-4-deoxy-epi-inositol). This is Inosose dehydratase from Clostridium botulinum (strain Alaska E43 / Type E3).